The following is a 250-amino-acid chain: 2,3-bisphosphoglycerate-dependent phosphoglycerate mutase (250 aa).

Substrate is bound by residues 10 to 17 (RHGESQWN), 23 to 24 (TG), Arg62, 89 to 92 (ERHY), Lys100, 116 to 117 (RR), and 185 to 186 (GN). Residue His11 is the Tele-phosphohistidine intermediate of the active site. Glu89 functions as the Proton donor/acceptor in the catalytic mechanism.

This sequence belongs to the phosphoglycerate mutase family. BPG-dependent PGAM subfamily. In terms of assembly, homodimer.

The catalysed reaction is (2R)-2-phosphoglycerate = (2R)-3-phosphoglycerate. It participates in carbohydrate degradation; glycolysis; pyruvate from D-glyceraldehyde 3-phosphate: step 3/5. In terms of biological role, catalyzes the interconversion of 2-phosphoglycerate and 3-phosphoglycerate. This Salmonella dublin (strain CT_02021853) protein is 2,3-bisphosphoglycerate-dependent phosphoglycerate mutase.